The primary structure comprises 121 residues: Basic phospholipase A2 homolog zhaoermiatoxin (121 aa).

7 disulfide bridges follow: Cys-26–Cys-115, Cys-28–Cys-44, Cys-43–Cys-95, Cys-49–Cys-121, Cys-50–Cys-88, Cys-57–Cys-81, and Cys-75–Cys-86.

This sequence belongs to the phospholipase A2 family. Group II subfamily. R49 sub-subfamily. Homodimer. As to expression, expressed by the venom gland.

Its subcellular location is the secreted. In terms of biological role, snake venom phospholipase A2 homolog that induces myonecrosis, and edema. Has low myotoxic activity. The sequence is that of Basic phospholipase A2 homolog zhaoermiatoxin from Protobothrops mangshanensis (Mangshan pitviper).